We begin with the raw amino-acid sequence, 432 residues long: Glutamate-1-semialdehyde 2,1-aminomutase 2 (432 aa).

At Lys268 the chain carries N6-(pyridoxal phosphate)lysine.

Belongs to the class-III pyridoxal-phosphate-dependent aminotransferase family. HemL subfamily. As to quaternary structure, homodimer. Pyridoxal 5'-phosphate serves as cofactor.

It is found in the cytoplasm. The enzyme catalyses (S)-4-amino-5-oxopentanoate = 5-aminolevulinate. Its pathway is porphyrin-containing compound metabolism; protoporphyrin-IX biosynthesis; 5-aminolevulinate from L-glutamyl-tRNA(Glu): step 2/2. The chain is Glutamate-1-semialdehyde 2,1-aminomutase 2 from Listeria welshimeri serovar 6b (strain ATCC 35897 / DSM 20650 / CCUG 15529 / CIP 8149 / NCTC 11857 / SLCC 5334 / V8).